Reading from the N-terminus, the 324-residue chain is Probable UDP-sugar transporter protein SLC35A4 (324 aa).

Over 1-18 (MSVEDGGMPGLGRPRQAR) the chain is Cytoplasmic. The chain crosses the membrane as a helical span at residues 19–39 (WTLMLLLSTAMYGAHAPLLAL). Residues 40–52 (CHVDGRVPFRPSS) lie on the Lumenal side of the membrane. A helical transmembrane segment spans residues 53–73 (AVLLTELTKLLLCAFSLLVGW). The Cytoplasmic segment spans residues 74–85 (QAWPQGPPPWRQ). The chain crosses the membrane as a helical span at residues 86–106 (AAPFALSALLYGANNNLVIYL). Residues 107-142 (QRYMDPSTYQVLSNLKIGSTAVLYCLCLRHRLSVRQ) are Lumenal-facing. The helical transmembrane segment at 143–163 (GLALLLLMAAGACYAAGGLQV) threads the bilayer. The Cytoplasmic segment spans residues 164–180 (PGNTLPSPPPAAAASPM). Residues 181 to 201 (PLHITPLGLLLLILYCLISGL) traverse the membrane as a helical segment. At 202 to 214 (SSVYTELLMKRQR) the chain is on the lumenal side. Residues 215 to 235 (LPLALQNLFLYTFGVLLNLGL) traverse the membrane as a helical segment. At 236–250 (HAGGGSGPGLLEGFS) the chain is on the cytoplasmic side. Residues 251 to 271 (GWAALVVLSQALNGLLMSAVM) form a helical membrane-spanning segment. Residues 272–275 (KHGS) are Lumenal-facing. A helical transmembrane segment spans residues 276–298 (SITRLFVVSCSLVVNAVLSAVLL). Over 299–324 (RLQLTAAFFLATLLIGLAMRLYYGSR) the chain is Cytoplasmic.

The protein belongs to the nucleotide-sugar transporter family. SLC35A subfamily. As to quaternary structure, found in a complex with SLC35A2 and SLC35A3.

It localises to the golgi apparatus membrane. It catalyses the reaction CDP-L-ribitol(in) + CDP(out) = CDP-L-ribitol(out) + CDP(in). Functionally, mediates the transport of CDP-ribitol. Does not exhibit CMP-sialic acid, UDP-galactose and UDP-N-acetylglucosamine transport activity. This Homo sapiens (Human) protein is Probable UDP-sugar transporter protein SLC35A4.